A 454-amino-acid polypeptide reads, in one-letter code: Exopolyphosphatase PRUNE1 (454 aa).

Methionine 1 is modified (N-acetylmethionine). Aspartate 28, aspartate 30, aspartate 106, and aspartate 179 together coordinate Mn(2+). The short motif at 106–108 (DHH) is the DHH motif element. The interval 394-421 (SLIAGLSQDDEDPPLPPTPMNSLVDECP) is essential for homodimerization. Positions 398–421 (GLSQDDEDPPLPPTPMNSLVDECP) are disordered. Residue serine 400 is modified to Phosphoserine. Position 411 is a phosphothreonine (threonine 411). Position 415 is a phosphoserine (serine 415).

Belongs to the PPase class C family. Prune subfamily. In terms of assembly, homooligomer. Able to homodimerize via its C-terminal domain. Interacts with NME1. Interacts with GSK3; at focal adhesion complexes where paxillin and vinculin are colocalized. Interacts with alpha and beta tubulin. Mn(2+) is required as a cofactor.

It localises to the cytoplasm. Its subcellular location is the nucleus. It is found in the cell junction. The protein localises to the focal adhesion. The catalysed reaction is diphosphate + H2O = 2 phosphate + H(+). Activated by magnesium ions and inhibited by manganese ions. Inhibited by dipyridamole, moderately sensitive to IBMX and inhibited by vinpocetine. Its function is as follows. Phosphodiesterase (PDE) that has higher activity toward cAMP than cGMP, as substrate. Plays a role in cell proliferation, migration and differentiation, and acts as a negative regulator of NME1. Plays a role in the regulation of neurogenesis. Involved in the regulation of microtubule polymerization. The sequence is that of Exopolyphosphatase PRUNE1 (Prune1) from Rattus norvegicus (Rat).